A 208-amino-acid chain; its full sequence is Large ribosomal subunit protein uL4 (208 aa).

The span at Ala47–Arg58 shows a compositional bias: basic and acidic residues. The disordered stretch occupies residues Ala47–Gly84.

Belongs to the universal ribosomal protein uL4 family. As to quaternary structure, part of the 50S ribosomal subunit.

Functionally, one of the primary rRNA binding proteins, this protein initially binds near the 5'-end of the 23S rRNA. It is important during the early stages of 50S assembly. It makes multiple contacts with different domains of the 23S rRNA in the assembled 50S subunit and ribosome. Its function is as follows. Forms part of the polypeptide exit tunnel. The chain is Large ribosomal subunit protein uL4 from Sphingopyxis alaskensis (strain DSM 13593 / LMG 18877 / RB2256) (Sphingomonas alaskensis).